The chain runs to 309 residues: Homoserine O-succinyltransferase (309 aa).

Cys142 functions as the Acyl-thioester intermediate in the catalytic mechanism. Residues Lys163 and Ser192 each contribute to the substrate site. The active-site Proton acceptor is His235. Glu237 is an active-site residue. Arg249 lines the substrate pocket.

Belongs to the MetA family.

It is found in the cytoplasm. The enzyme catalyses L-homoserine + succinyl-CoA = O-succinyl-L-homoserine + CoA. It functions in the pathway amino-acid biosynthesis; L-methionine biosynthesis via de novo pathway; O-succinyl-L-homoserine from L-homoserine: step 1/1. Functionally, transfers a succinyl group from succinyl-CoA to L-homoserine, forming succinyl-L-homoserine. This is Homoserine O-succinyltransferase from Erwinia tasmaniensis (strain DSM 17950 / CFBP 7177 / CIP 109463 / NCPPB 4357 / Et1/99).